Reading from the N-terminus, the 133-residue chain is MTKNTIQESVATGRRKQAVSSVRLRSGNGKIDVNGKTLEQYFPLEVQRATILAPLKMLGDVNSFDLIIRVSGGGVQGQVIATRLGLARAVLQEKEDMKQELKSQGFLTRDPRKKERKKYGRKKARKSFQFSKR.

Residues 97–133 are disordered; it reads MKQELKSQGFLTRDPRKKERKKYGRKKARKSFQFSKR. Over residues 114-133 the composition is skewed to basic residues; that stretch reads KERKKYGRKKARKSFQFSKR.

Belongs to the universal ribosomal protein uS9 family.

In Chlamydia muridarum (strain MoPn / Nigg), this protein is Small ribosomal subunit protein uS9 (rpsI).